The primary structure comprises 352 residues: C-X-C chemokine receptor type 4 (352 aa).

Residues 1-21 (MEGISIYTSDNYTEEMGSGDY) form an important for chemokine binding and signaling region. At 1 to 38 (MEGISIYTSDNYTEEMGSGDYDSIKEPCFREENAHFNR) the chain is on the extracellular side. A Sulfotyrosine modification is found at Tyr7. Asn11 is a glycosylation site (N-linked (GlcNAc...) asparagine). The residue at position 12 (Tyr12) is a Sulfotyrosine. An O-linked (Xyl...) (chondroitin sulfate) serine glycan is attached at Ser18. At Tyr21 the chain carries Sulfotyrosine. 2 cysteine pairs are disulfide-bonded: Cys28/Cys274 and Cys109/Cys186. A helical transmembrane segment spans residues 39–63 (IFLPTIYSIIFLTGIVGNGLVILVM). At 64–77 (GYQKKLRSMTDKYR) the chain is on the cytoplasmic side. A helical membrane pass occupies residues 78-99 (LHLSVADLLFVITLPFWAVDAV). Residues 94–97 (WAVD) are chemokine binding. Residues 100–110 (ANWYFGNFLCK) lie on the Extracellular side of the membrane. The helical transmembrane segment at 111-130 (AVHVIYTVNLYSSVLILAFI) threads the bilayer. A chemokine binding region spans residues 113-117 (HVIYT). Residues 131-154 (SLDRYLAIVHATNSQKPRKLLAEK) lie on the Cytoplasmic side of the membrane. The short motif at 133-135 (DRY) is the Important for signaling element. Positions 135-147 (YLAIVHATNSQKP) are involved in dimerization; when bound to chemokine. A helical transmembrane segment spans residues 155 to 174 (VVYVGVWIPALLLTIPDFIF). Over 175–195 (ASVSEADDRYICDRFYPNDLW) the chain is Extracellular. The segment at 186–190 (CDRFY) is chemokine binding, important for signaling. Residues 191–210 (PNDLWVVVFQFQHIMVGLIL) form an involved in dimerization region. A helical membrane pass occupies residues 196-216 (VVVFQFQHIMVGLILPGIDIL). The Cytoplasmic portion of the chain corresponds to 217-241 (SCYCIIISKLSHSKGHQKRKALKTT). The helical transmembrane segment at 242–261 (VILILAFFACWLPYYIGISI) threads the bilayer. Topologically, residues 262–282 (DSFILLEIIKQGCEFENTVHK) are extracellular. Residues 266–268 (LLE) form an involved in dimerization region. The chain crosses the membrane as a helical span at residues 283 to 302 (WISITEALAFFHCCLNPILY). The Cytoplasmic segment spans residues 303 to 352 (AFLGAKFKTSAQHALTSVSRGSSLKILSKGKRGGHSSVSTESESSSFHSS). A phosphoserine mark is found at Ser319 and Ser321. A phosphoserine; by PKC and GRK6 mark is found at Ser324 and Ser325. Positions 329 to 352 (LSKGKRGGHSSVSTESESSSFHSS) are disordered. Residue Ser330 is modified to Phosphoserine; by GRK6. Residue Lys331 forms a Glycyl lysine isopeptide (Lys-Gly) (interchain with G-Cter in ubiquitin) linkage. Residues 337 to 352 (HSSVSTESESSSFHSS) show a composition bias toward low complexity. Ser339 bears the Phosphoserine; by GRK6 mark. Ser348 and Ser351 each carry phosphoserine.

This sequence belongs to the G-protein coupled receptor 1 family. Monomer. Can form homodimers. Interacts with CD164. Interacts with ARRB2; the interaction is dependent on the C-terminal phosphorylation of CXCR4 and allows activation of MAPK1 and MAPK3. Interacts with ARR3; the interaction is dependent on the C-terminal phosphorylation of CXCR4 and modulates calcium mobilization. Interacts with RNF113A; the interaction, enhanced by CXCL12, promotes CXCR4 ubiquitination and subsequent degradation. Interacts (via the cytoplasmic C-terminal) with ITCH (via the WW domains I and II); the interaction, enhanced by CXCL12, promotes CXCR4 ubiquitination and leads to its degradation. Interacts with extracellular ubiquitin. Interacts with DBN1; this interaction is enhanced by antigenic stimulation. Following LPS binding, may form a complex with GDF5, HSP90AA1 and HSPA8. Phosphorylated on agonist stimulation. Rapidly phosphorylated on serine and threonine residues in the C-terminal. Phosphorylation at Ser-324 and Ser-325 leads to recruitment of ITCH, ubiquitination and protein degradation. In terms of processing, ubiquitinated after ligand binding, leading to its degradation. Ubiquitinated by ITCH at the cell membrane on agonist stimulation. The ubiquitin-dependent mechanism, endosomal sorting complex required for transport (ESCRT), then targets CXCR4 for lysosomal degradation. This process is dependent also on prior Ser-/Thr-phosphorylation in the C-terminal of CXCR4. Also binding of ARRB1 to STAM negatively regulates CXCR4 sorting to lysosomes though modulating ubiquitination of SFR5S. Post-translationally, sulfation is required for efficient binding of CXCL12/SDF-1alpha and promotes its dimerization. O- and N-glycosylated. N-glycosylation can mask coreceptor function. The O-glycosylation chondroitin sulfate attachment does not affect interaction with CXCL12/SDF-1alpha nor its coreceptor activity.

Its subcellular location is the cell membrane. It is found in the cell junction. The protein resides in the early endosome. The protein localises to the late endosome. It localises to the lysosome. Receptor for the C-X-C chemokine CXCL12/SDF-1 that transduces a signal by increasing intracellular calcium ion levels and enhancing MAPK1/MAPK3 activation. Involved in the AKT signaling cascade. Plays a role in regulation of cell migration, e.g. during wound healing. Acts as a receptor for extracellular ubiquitin; leading to enhanced intracellular calcium ions and reduced cellular cAMP levels. Binds bacterial lipopolysaccharide (LPS) et mediates LPS-induced inflammatory response, including TNF secretion by monocytes. Involved in hematopoiesis and in cardiac ventricular septum formation. Also plays an essential role in vascularization of the gastrointestinal tract, probably by regulating vascular branching and/or remodeling processes in endothelial cells. Involved in cerebellar development. In the CNS, could mediate hippocampal-neuron survival. This Macaca mulatta (Rhesus macaque) protein is C-X-C chemokine receptor type 4 (CXCR4).